The following is a 123-amino-acid chain: cAMP-responsive element-binding protein-like 2 (123 aa).

The segment at 1-24 is disordered; sequence MDDSKVVGGKVKKPGKRGRKPAKI. Residues 10–21 show a composition bias toward basic residues; that stretch reads KVKKPGKRGRKP. The bZIP domain occupies 23–86; sequence KIDLKAKLER…MAMDQGKIPS (64 aa). The interval 29 to 60 is basic motif; it reads KLERSRQSARECRARKKLRYQYLEELVSSRER. Residues 62-69 are leucine-zipper; sequence ICALREEL. The disordered stretch occupies residues 93-123; it reads TGEEQNKSQQNSSRHPKAGKTDANTNSLVGN. Polar residues predominate over residues 114–123; it reads DANTNSLVGN.

This sequence belongs to the bZIP family. ATF subfamily. As to quaternary structure, interacts with CREB1; regulates CREB1 phosphorylation, stability and transcriptional activity. In terms of processing, phosphorylated by AMPK.

It localises to the nucleus. Functionally, probable regulator of CREB1 transcriptional activity which is involved in adipose cells differentiation. May also play a regulatory role in the cell cycle. The chain is cAMP-responsive element-binding protein-like 2 (Crebl2) from Rattus norvegicus (Rat).